Here is a 202-residue protein sequence, read N- to C-terminus: Nucleoside triphosphate pyrophosphatase (202 aa).

The active-site Proton acceptor is the aspartate 79.

Belongs to the Maf family. Requires a divalent metal cation as cofactor.

The protein localises to the cytoplasm. The enzyme catalyses a ribonucleoside 5'-triphosphate + H2O = a ribonucleoside 5'-phosphate + diphosphate + H(+). The catalysed reaction is a 2'-deoxyribonucleoside 5'-triphosphate + H2O = a 2'-deoxyribonucleoside 5'-phosphate + diphosphate + H(+). Nucleoside triphosphate pyrophosphatase. May have a dual role in cell division arrest and in preventing the incorporation of modified nucleotides into cellular nucleic acids. This chain is Nucleoside triphosphate pyrophosphatase, found in Rhodospirillum rubrum (strain ATCC 11170 / ATH 1.1.1 / DSM 467 / LMG 4362 / NCIMB 8255 / S1).